Reading from the N-terminus, the 322-residue chain is Homoserine kinase (322 aa).

107–117 (PLSSGMGGSAA) serves as a coordination point for ATP.

Belongs to the GHMP kinase family. Homoserine kinase subfamily.

The protein localises to the cytoplasm. The catalysed reaction is L-homoserine + ATP = O-phospho-L-homoserine + ADP + H(+). It participates in amino-acid biosynthesis; L-threonine biosynthesis; L-threonine from L-aspartate: step 4/5. Its function is as follows. Catalyzes the ATP-dependent phosphorylation of L-homoserine to L-homoserine phosphate. This is Homoserine kinase from Xylella fastidiosa (strain 9a5c).